Here is a 114-residue protein sequence, read N- to C-terminus: Large ribosomal subunit protein uL22 (114 aa).

This sequence belongs to the universal ribosomal protein uL22 family. As to quaternary structure, part of the 50S ribosomal subunit.

This protein binds specifically to 23S rRNA; its binding is stimulated by other ribosomal proteins, e.g. L4, L17, and L20. It is important during the early stages of 50S assembly. It makes multiple contacts with different domains of the 23S rRNA in the assembled 50S subunit and ribosome. In terms of biological role, the globular domain of the protein is located near the polypeptide exit tunnel on the outside of the subunit, while an extended beta-hairpin is found that lines the wall of the exit tunnel in the center of the 70S ribosome. The protein is Large ribosomal subunit protein uL22 of Ehrlichia chaffeensis (strain ATCC CRL-10679 / Arkansas).